A 334-amino-acid chain; its full sequence is Biotin synthase (334 aa).

The Radical SAM core domain occupies 55-280 (EEIEVEGIIS…HTMLRFAGGR (226 aa)). Residues Cys70, Cys74, and Cys77 each coordinate [4Fe-4S] cluster. Cys113, Cys205, and Arg275 together coordinate [2Fe-2S] cluster.

This sequence belongs to the radical SAM superfamily. Biotin synthase family. In terms of assembly, homodimer. [4Fe-4S] cluster is required as a cofactor. It depends on [2Fe-2S] cluster as a cofactor.

The catalysed reaction is (4R,5S)-dethiobiotin + (sulfur carrier)-SH + 2 reduced [2Fe-2S]-[ferredoxin] + 2 S-adenosyl-L-methionine = (sulfur carrier)-H + biotin + 2 5'-deoxyadenosine + 2 L-methionine + 2 oxidized [2Fe-2S]-[ferredoxin]. It participates in cofactor biosynthesis; biotin biosynthesis; biotin from 7,8-diaminononanoate: step 2/2. Its function is as follows. Catalyzes the conversion of dethiobiotin (DTB) to biotin by the insertion of a sulfur atom into dethiobiotin via a radical-based mechanism. The polypeptide is Biotin synthase (Corynebacterium glutamicum (strain ATCC 13032 / DSM 20300 / JCM 1318 / BCRC 11384 / CCUG 27702 / LMG 3730 / NBRC 12168 / NCIMB 10025 / NRRL B-2784 / 534)).